We begin with the raw amino-acid sequence, 155 residues long: Molybdopterin synthase catalytic subunit (155 aa).

Substrate is bound by residues His109–Arg110, Lys125, and Lys132–Glu134.

Belongs to the MoaE family. MOCS2B subfamily. In terms of assembly, heterotetramer; composed of 2 small (MOCS2A) and 2 large (MOCS2B) subunits.

The protein resides in the cytoplasm. Its subcellular location is the cytosol. It catalyses the reaction 2 [molybdopterin-synthase sulfur-carrier protein]-C-terminal-Gly-aminoethanethioate + cyclic pyranopterin phosphate + H2O = molybdopterin + 2 [molybdopterin-synthase sulfur-carrier protein]-C-terminal Gly-Gly + 2 H(+). The protein operates within cofactor biosynthesis; molybdopterin biosynthesis. In terms of biological role, catalytic subunit of the molybdopterin synthase complex, a complex that catalyzes the conversion of precursor Z into molybdopterin. Acts by mediating the incorporation of 2 sulfur atoms from thiocarboxylated MOCS2A into precursor Z to generate a dithiolene group. The sequence is that of Molybdopterin synthase catalytic subunit from Taeniopygia guttata (Zebra finch).